Here is a 311-residue protein sequence, read N- to C-terminus: NAD kinase (311 aa).

Asp-88 (proton acceptor) is an active-site residue. NAD(+)-binding positions include 88–89, 162–163, Arg-190, Asp-192, Val-200, and 203–208; these read DG, NE, and TAHNLS.

The protein belongs to the NAD kinase family. The cofactor is a divalent metal cation.

The protein resides in the cytoplasm. The enzyme catalyses NAD(+) + ATP = ADP + NADP(+) + H(+). Involved in the regulation of the intracellular balance of NAD and NADP, and is a key enzyme in the biosynthesis of NADP. Catalyzes specifically the phosphorylation on 2'-hydroxyl of the adenosine moiety of NAD to yield NADP. The sequence is that of NAD kinase from Rhodopirellula baltica (strain DSM 10527 / NCIMB 13988 / SH1).